A 151-amino-acid chain; its full sequence is Caveolin-3 (151 aa).

The Cytoplasmic portion of the chain corresponds to 1–83 (MMTEEHTDLE…RLLSTLLGVP (83 aa)). A Glycyl lysine isopeptide (Lys-Gly) (interchain with G-Cter in SUMO3) cross-link involves residue lysine 38. A required for interaction with DAG1 region spans residues 64-114 (TFTVSKYWCYRLLSTLLGVPLALLWGFLFACISFCHIWAVVPCIKSYLIEI). The segment at residues 84 to 104 (LALLWGFLFACISFCHIWAVV) is an intramembrane region (helical). Topologically, residues 105–151 (PCIKSYLIEIQCISHIYSLCIRTFCNPLFAALGQVCSNIKVVLRREG) are cytoplasmic.

The protein belongs to the caveolin family. As to quaternary structure, homooligomer. Interacts with DYSF. Interacts with DLG1 and KCNA5; forms a ternary complex. Interacts with DAG1 (via its C-terminal); the interaction prevents binding of DAG1 with DMD. Interacts with TRIM72. Interacts with MUSK; may regulate MUSK signaling. Interacts with POPDC1. Interacts with CAVIN1, CAVIN2 and CAVIN4. Post-translationally, sumoylation with SUMO3 by PIAS4 may reduce agonist-induced internalization and desensitization of adrenergic receptor ABRD2. As to expression, expressed predominantly in muscle.

It is found in the golgi apparatus membrane. The protein resides in the cell membrane. Its subcellular location is the membrane. It localises to the caveola. The protein localises to the sarcolemma. May act as a scaffolding protein within caveolar membranes. Interacts directly with G-protein alpha subunits and can functionally regulate their activity. May also regulate voltage-gated potassium channels. Plays a role in the sarcolemma repair mechanism of both skeletal muscle and cardiomyocytes that permits rapid resealing of membranes disrupted by mechanical stress. Mediates the recruitment of CAVIN2 and CAVIN3 proteins to the caveolae. The sequence is that of Caveolin-3 from Mus musculus (Mouse).